Reading from the N-terminus, the 135-residue chain is Large-conductance mechanosensitive channel (135 aa).

The next 2 membrane-spanning stretches (helical) occupy residues 10 to 30 (FAMR…AAFG) and 76 to 96 (GVFI…FLAI).

It belongs to the MscL family. Homopentamer.

The protein localises to the cell inner membrane. Channel that opens in response to stretch forces in the membrane lipid bilayer. May participate in the regulation of osmotic pressure changes within the cell. This chain is Large-conductance mechanosensitive channel, found in Cronobacter sakazakii (strain ATCC BAA-894) (Enterobacter sakazakii).